A 286-amino-acid polypeptide reads, in one-letter code: uncharacterized protein (286 aa).

Residues 152-182 (YPSTTTSVTPGKKGEKTTKVDGFSSPLNQDT) form a disordered region. Residues 198–218 (VLIAVTLFVSGIAITVFVIFE) form a helical membrane-spanning segment. The tract at residues 239-278 (RRPRKEDQQPGTAESQSDTQPKKVGQEAPNSSSPKKAVEI) is disordered. Over residues 247 to 257 (QPGTAESQSDT) the composition is skewed to polar residues.

The protein localises to the membrane. This is an uncharacterized protein from Bos taurus (Bovine).